Reading from the N-terminus, the 504-residue chain is Maturase K (504 aa).

Belongs to the intron maturase 2 family. MatK subfamily.

The protein resides in the plastid. The protein localises to the chloroplast. Functionally, usually encoded in the trnK tRNA gene intron. Probably assists in splicing its own and other chloroplast group II introns. This Cucumis sativus (Cucumber) protein is Maturase K.